Here is a 280-residue protein sequence, read N- to C-terminus: PsbP domain-containing protein 7, chloroplastic (280 aa).

The transit peptide at 1–36 (MSLKPYFSLLYSSPTNVKLSNFLIAQQPSGDLKTTP) directs the protein to the chloroplast.

It belongs to the PsbP family.

The protein localises to the plastid. It localises to the chloroplast. This chain is PsbP domain-containing protein 7, chloroplastic (PPD7), found in Arabidopsis thaliana (Mouse-ear cress).